The following is a 238-amino-acid chain: Pyridoxine 5'-phosphate synthase (238 aa).

Asn-7 serves as a coordination point for 3-amino-2-oxopropyl phosphate. Residue Asp-9–His-10 participates in 1-deoxy-D-xylulose 5-phosphate binding. Position 18 (Arg-18) interacts with 3-amino-2-oxopropyl phosphate. His-43 serves as the catalytic Proton acceptor. 1-deoxy-D-xylulose 5-phosphate-binding residues include Arg-45 and His-50. Glu-70 acts as the Proton acceptor in catalysis. Thr-100 provides a ligand contact to 1-deoxy-D-xylulose 5-phosphate. His-191 serves as the catalytic Proton donor. 3-amino-2-oxopropyl phosphate is bound by residues Gly-192 and Gly-213–His-214.

The protein belongs to the PNP synthase family. Homooctamer; tetramer of dimers.

The protein resides in the cytoplasm. The enzyme catalyses 3-amino-2-oxopropyl phosphate + 1-deoxy-D-xylulose 5-phosphate = pyridoxine 5'-phosphate + phosphate + 2 H2O + H(+). It functions in the pathway cofactor biosynthesis; pyridoxine 5'-phosphate biosynthesis; pyridoxine 5'-phosphate from D-erythrose 4-phosphate: step 5/5. Functionally, catalyzes the complicated ring closure reaction between the two acyclic compounds 1-deoxy-D-xylulose-5-phosphate (DXP) and 3-amino-2-oxopropyl phosphate (1-amino-acetone-3-phosphate or AAP) to form pyridoxine 5'-phosphate (PNP) and inorganic phosphate. The sequence is that of Pyridoxine 5'-phosphate synthase from Thermosynechococcus vestitus (strain NIES-2133 / IAM M-273 / BP-1).